We begin with the raw amino-acid sequence, 395 residues long: Choline/ethanolamine kinase (395 aa).

Ala-2 bears the N-acetylalanine mark. Residues 75–81 (SGGLSNL), Arg-104, 146–152 (QYIPSRP), Gln-244, and Asp-264 each bind ATP. 77 to 79 (GLS) contacts phosphocholine.

It belongs to the choline/ethanolamine kinase family. Homodimer, and heterodimer with CHKA.

The catalysed reaction is choline + ATP = phosphocholine + ADP + H(+). The enzyme catalyses ethanolamine + ATP = phosphoethanolamine + ADP + H(+). The protein operates within phospholipid metabolism; phosphatidylethanolamine biosynthesis; phosphatidylethanolamine from ethanolamine: step 1/3. Functionally, has a key role in phospholipid metabolism, and catalyzes the first step of phosphatidylethanolamine and phosphatidylcholine biosynthesis. The polypeptide is Choline/ethanolamine kinase (CHKB) (Homo sapiens (Human)).